The following is a 264-amino-acid chain: Glutamate racemase (264 aa).

Substrate contacts are provided by residues 10–11 and 42–43; these read DS and YG. The active-site Proton donor/acceptor is the C73. 74-75 contacts substrate; it reads NT. Catalysis depends on C181, which acts as the Proton donor/acceptor. 182 to 183 lines the substrate pocket; the sequence is TH.

It belongs to the aspartate/glutamate racemases family.

The enzyme catalyses L-glutamate = D-glutamate. It functions in the pathway cell wall biogenesis; peptidoglycan biosynthesis. In terms of biological role, provides the (R)-glutamate required for cell wall biosynthesis. The chain is Glutamate racemase from Thermoanaerobacter sp. (strain X514).